The following is a 600-amino-acid chain: NADH-quinone oxidoreductase subunit C/D (600 aa).

Residues 1-190 (MVNNMTDLTA…SPFELTKAKQ (190 aa)) are NADH dehydrogenase I subunit C. Residues 214-600 (DFMFLNLGPN…IDFVMSDVDR (387 aa)) form an NADH dehydrogenase I subunit D region.

This sequence in the N-terminal section; belongs to the complex I 30 kDa subunit family. The protein in the C-terminal section; belongs to the complex I 49 kDa subunit family. In terms of assembly, NDH-1 is composed of 13 different subunits. Subunits NuoB, CD, E, F, and G constitute the peripheral sector of the complex.

The protein localises to the cell inner membrane. It catalyses the reaction a quinone + NADH + 5 H(+)(in) = a quinol + NAD(+) + 4 H(+)(out). In terms of biological role, NDH-1 shuttles electrons from NADH, via FMN and iron-sulfur (Fe-S) centers, to quinones in the respiratory chain. The immediate electron acceptor for the enzyme in this species is believed to be ubiquinone. Couples the redox reaction to proton translocation (for every two electrons transferred, four hydrogen ions are translocated across the cytoplasmic membrane), and thus conserves the redox energy in a proton gradient. This chain is NADH-quinone oxidoreductase subunit C/D, found in Escherichia coli O6:H1 (strain CFT073 / ATCC 700928 / UPEC).